The sequence spans 953 residues: MEKTYNPQSIEQALYQRWEEAGYFKPHGDTSKDAYSIMIPPPNVTGSLHMGHAFQDTIMDTLIRAERMKGKNTLWQVGTDHAGIATQMVVERKIAAEEGKTKHDYGRDAFIDKIWEWKAESGGTITKQLRRLGASVDWDRERFTMDDGLSAATQEVFVRLFEEDLIYRGKRLVNWDPKLHTAISDLEVESKDKKGFMWHFRYPLADGVKTADGKDYIVVATTRPETMLGDTGVAVNPEDPRYKDLIGKQIKLPIVGRLIPIVGDEHADMDKGTGCVKITPAHDFNDYEVGKRHSLPMINILTFNADIRDAAEVFDTNGEANDAYNSELPAKYHGMERFAARKAIVAEFDELGLLEEVKDHDLTVPYGDRGGVAIEPMLTDQWYVRTAPLAAPAVKAVEDGQIQFVPKQYENMYFAWMRDVQDWCISRQLWWGHRIPAWYDNYGKVYVGRTEDEVREKNNLASVVVLRQDDDVLDTWFSSALWTFGTQGWPENTDALKTFHPSEVLVSGFDIIFFWVARMIMMTMHFVKDEEGNAQVPFKTVYMTGLIRDENGDKMSKSKGNVLDPIDMIDGIGLEELVEKRCGNMMQPKLAAKIEKQTRKAFEGGIEPYGTDALRFTLAAMASTGRDINWDMKRLEGYRNFCNKLWNASRYVLMNTEEHDCGMAEGAELEFSLADQWITSQFEVAAKEFNAHLDNYRLDMAANTLYEFIWNQFCDWYLELTKPVLWKGTEAQQRATRYTLITVLEKTLRLAHPILPYITESIWQSVKPLVDGVEGETIMTQALPQFNEDNFNADVVADLEWVKAFITSIRNLRAEYDIAPSKGLDVMIKVADEKDAARIQANEIVLTSLAKLDSIKVLAKNEETQACATSLVGKSELMIPMAGLIDKDAELARLDKEVAKTQGEIKRIEGKLNNQGFVAKAPEVVITKEREKLEGYQETLVKLEAQKETIAAL.

The 'HIGH' region motif lies at 42-52 (PNVTGSLHMGH). The short motif at 554 to 558 (KMSKS) is the 'KMSKS' region element. Lys-557 is an ATP binding site. Positions 884 to 953 (LIDKDAELAR…EAQKETIAAL (70 aa)) form a coiled coil.

It belongs to the class-I aminoacyl-tRNA synthetase family. ValS type 1 subfamily. Monomer.

It localises to the cytoplasm. The catalysed reaction is tRNA(Val) + L-valine + ATP = L-valyl-tRNA(Val) + AMP + diphosphate. In terms of biological role, catalyzes the attachment of valine to tRNA(Val). As ValRS can inadvertently accommodate and process structurally similar amino acids such as threonine, to avoid such errors, it has a 'posttransfer' editing activity that hydrolyzes mischarged Thr-tRNA(Val) in a tRNA-dependent manner. The sequence is that of Valine--tRNA ligase from Photobacterium profundum (strain SS9).